Reading from the N-terminus, the 137-residue chain is Large ribosomal subunit protein uL16 (137 aa).

It belongs to the universal ribosomal protein uL16 family. In terms of assembly, part of the 50S ribosomal subunit.

Its function is as follows. Binds 23S rRNA and is also seen to make contacts with the A and possibly P site tRNAs. This chain is Large ribosomal subunit protein uL16, found in Maricaulis maris (strain MCS10) (Caulobacter maris).